A 163-amino-acid chain; its full sequence is Large ribosomal subunit protein bL21 (163 aa).

The disordered stretch occupies residues 124-163 (KETTKKTKATVSIKKTAKKPSEKKSAPQKKAAVVSNNKED).

Belongs to the bacterial ribosomal protein bL21 family. As to quaternary structure, part of the 50S ribosomal subunit. Contacts protein L20.

In terms of biological role, this protein binds to 23S rRNA in the presence of protein L20. In Bartonella quintana (strain Toulouse) (Rochalimaea quintana), this protein is Large ribosomal subunit protein bL21.